Reading from the N-terminus, the 680-residue chain is DNA-directed RNA polymerase subunit beta' (680 aa).

C69, C71, C87, and C90 together coordinate Zn(2+). Mg(2+) is bound by residues D489, D491, and D493.

This sequence belongs to the RNA polymerase beta' chain family. RpoC1 subfamily. As to quaternary structure, in plastids the minimal PEP RNA polymerase catalytic core is composed of four subunits: alpha, beta, beta', and beta''. When a (nuclear-encoded) sigma factor is associated with the core the holoenzyme is formed, which can initiate transcription. The cofactor is Mg(2+). Zn(2+) is required as a cofactor.

The protein resides in the plastid. Its subcellular location is the chloroplast. It catalyses the reaction RNA(n) + a ribonucleoside 5'-triphosphate = RNA(n+1) + diphosphate. Functionally, DNA-dependent RNA polymerase catalyzes the transcription of DNA into RNA using the four ribonucleoside triphosphates as substrates. In Olimarabidopsis pumila (Dwarf rocket), this protein is DNA-directed RNA polymerase subunit beta'.